The chain runs to 287 residues: Diaminopimelate epimerase (287 aa).

Residues Asn-15 and Asn-66 each coordinate substrate. Cys-75 functions as the Proton donor in the catalytic mechanism. Substrate is bound by residues 76-77, Asn-170, Asn-203, and 221-222; these read GN and ER. The Proton acceptor role is filled by Cys-230. Substrate is bound at residue 231–232; sequence GT.

The protein belongs to the diaminopimelate epimerase family. Homodimer.

The protein localises to the cytoplasm. The enzyme catalyses (2S,6S)-2,6-diaminopimelate = meso-2,6-diaminopimelate. The protein operates within amino-acid biosynthesis; L-lysine biosynthesis via DAP pathway; DL-2,6-diaminopimelate from LL-2,6-diaminopimelate: step 1/1. Functionally, catalyzes the stereoinversion of LL-2,6-diaminopimelate (L,L-DAP) to meso-diaminopimelate (meso-DAP), a precursor of L-lysine and an essential component of the bacterial peptidoglycan. In Desulfovibrio desulfuricans (strain ATCC 27774 / DSM 6949 / MB), this protein is Diaminopimelate epimerase.